We begin with the raw amino-acid sequence, 423 residues long: Limonoid 21-O-acetyltransferse (423 aa).

Residues H152 and D362 each act as proton acceptor in the active site.

This sequence belongs to the plant acyltransferase family. Monomer. Mainly expressed in petioles.

The enzyme catalyses isomeliandiol + acetyl-CoA = 21-O-acetyl-isomeliandiol + CoA. It functions in the pathway secondary metabolite biosynthesis; terpenoid biosynthesis. Its function is as follows. Acetyltransferase involved in the biosynthesis of limonoids triterpene natural products such as azadirachtin, an antifeedant widely used as bioinsecticide, and possessing many medicinal applications including anti-tumoral, anti-malarial, anti-rheumatic, antibacterial, anti-inflammatory, anti-pyretic and diuretic effects. Catalyzes the formation of 21-O-acetyl-isomeliandiol from isomeliandiol. The chain is Limonoid 21-O-acetyltransferse from Melia azedarach (Chinaberry tree).